A 336-amino-acid chain; its full sequence is N-acetylornithine carbamoyltransferase (336 aa).

Carbamoyl phosphate contacts are provided by residues 49–52 (SMRT), W77, and R112. E144 is a N(2)-acetyl-L-ornithine binding site. 148 to 151 (HPCQ) is a carbamoyl phosphate binding site. 2 residues coordinate N(2)-acetyl-L-ornithine: K252 and L295. 294-295 (CL) contacts carbamoyl phosphate. K302 carries the post-translational modification N6-carboxylysine. R322 contacts carbamoyl phosphate.

This sequence belongs to the aspartate/ornithine carbamoyltransferase superfamily. AOTCase family. As to quaternary structure, homotrimer.

The protein localises to the cytoplasm. It catalyses the reaction N(2)-acetyl-L-ornithine + carbamoyl phosphate = N(2)-acetyl-L-citrulline + phosphate + H(+). It functions in the pathway amino-acid biosynthesis; L-arginine biosynthesis. With respect to regulation, carboxylation at Lys-302 increases the catalytic activity of the enzyme. Functionally, catalyzes the transfer of the carbamoyl group from carbamoyl phosphate to the delta-amino group of N(2)-acetyl-L-ornithine to produce N(2)-acetyl-L-citrulline. This is a step in an alternative arginine biosynthesis pathway. The enzyme has no activity with ornithine. In Xylella fastidiosa (strain 9a5c), this protein is N-acetylornithine carbamoyltransferase.